A 132-amino-acid chain; its full sequence is Small ribosomal subunit protein uS8 (132 aa).

This sequence belongs to the universal ribosomal protein uS8 family. In terms of assembly, part of the 30S ribosomal subunit. Contacts proteins S5 and S12.

Functionally, one of the primary rRNA binding proteins, it binds directly to 16S rRNA central domain where it helps coordinate assembly of the platform of the 30S subunit. The chain is Small ribosomal subunit protein uS8 from Halothermothrix orenii (strain H 168 / OCM 544 / DSM 9562).